We begin with the raw amino-acid sequence, 442 residues long: tRNA-2-methylthio-N(6)-dimethylallyladenosine synthase (442 aa).

Residues 5-122 (KKVFIKTLGC…LPEMIKQKQK (118 aa)) enclose the MTTase N-terminal domain. Residues cysteine 14, cysteine 51, cysteine 85, cysteine 159, cysteine 163, and cysteine 166 each coordinate [4Fe-4S] cluster. The Radical SAM core domain maps to 145 to 378 (KAEGAKAYVS…DLLNSNAQII (234 aa)). Residues 380 to 442 (RQMVGTNQRI…LPNSLRGELI (63 aa)) enclose the TRAM domain.

Belongs to the methylthiotransferase family. MiaB subfamily. In terms of assembly, monomer. Requires [4Fe-4S] cluster as cofactor.

The protein resides in the cytoplasm. The enzyme catalyses N(6)-dimethylallyladenosine(37) in tRNA + (sulfur carrier)-SH + AH2 + 2 S-adenosyl-L-methionine = 2-methylsulfanyl-N(6)-dimethylallyladenosine(37) in tRNA + (sulfur carrier)-H + 5'-deoxyadenosine + L-methionine + A + S-adenosyl-L-homocysteine + 2 H(+). In terms of biological role, catalyzes the methylthiolation of N6-(dimethylallyl)adenosine (i(6)A), leading to the formation of 2-methylthio-N6-(dimethylallyl)adenosine (ms(2)i(6)A) at position 37 in tRNAs that read codons beginning with uridine. The chain is tRNA-2-methylthio-N(6)-dimethylallyladenosine synthase from Francisella tularensis subsp. holarctica (strain LVS).